A 531-amino-acid chain; its full sequence is Protein MGF 505-1R (531 aa).

This sequence belongs to the asfivirus MGF 505 family.

Its function is as follows. Plays a role in virus cell tropism, and may be required for efficient virus replication in macrophages. This Ornithodoros (relapsing fever ticks) protein is Protein MGF 505-1R.